The chain runs to 581 residues: MKEIAHSQAYGNRVFSRDSAVDSKKDVSISAEQPKTISKLTPYLFEGDIFLSTKQAMNILDSLASKNKTNKKGQQRMAHDAPLYLFRGANEKGKRFAAEYDAKWFQFPIKYRFDESLDILHISQILKALEIWQSNTCIKFENDQEASGDYIEFFEGDGCYSMVGRFGGRQGISIGKGCERTGTIIHEVGHTLGLWHEQSRPDAEEYITVVKEYIIPSYISEFLTRSEHEITTFNVPYDLGSVMHYGSTAFSIDQRSKTLLTKDPFYQMTIGQRDSLSFYNIKLINEAYCKGDCKEKNECKNGGYLNPSNCQSCLCPSGFGGSKCEMHASSESNSKCGGTLKAIIDWQYIESPGYPDGYPTNVICNWLIETDKEERIEISFEDNFGIFCSSTCVDYIELKIGNDLANTGYRICCYDKPNDSLVSAKYQAVIIFRATTGEDTGFKLKFRKTMKPAQTTPSLPKTTTTAPHTTIVGNDIWSEWGEWSQCSRSCGACGIKSRLRICKTAQCSGKVQQFLTCNLQACPVDIRCTKVKFKNRLCADGNTCGKPGELLSSCSRPSCCPPFENVDGKCQTDQPLLIPLE.

Residues Met1–Arg95 constitute a propeptide that is removed on maturation. N-linked (GlcNAc...) asparagine glycosylation is present at Asn67. Positions Ala97 to Lys290 constitute a Peptidase M12A domain. Disulfide bonds link Cys137-Cys289, Cys159-Cys178, Cys293-Cys313, Cys315-Cys324, and Cys336-Cys364. His186 contacts Zn(2+). The active site involves Glu187. Zn(2+)-binding residues include His190 and His196. The region spanning Asn285–Glu325 is the EGF-like domain. Residues Cys336–Thr449 enclose the CUB domain. Residue Asn418 is glycosylated (N-linked (GlcNAc...) asparagine). A TSP type-1 domain is found at Asn474–Pro523. 3 disulfide bridges follow: Cys486/Cys517, Cys490/Cys522, and Cys502/Cys507.

Zn(2+) is required as a cofactor.

It is found in the secreted. Its activity is regulated as follows. Inhibited by 1,10-phenanthroline. In terms of biological role, metalloprotease. Involved in molting, a process during larval stages in which a new cuticle is formed and the old cuticle is shed. This Brugia malayi (Filarial nematode worm) protein is Zinc metalloproteinase nas-36.